The chain runs to 537 residues: Methionine--tRNA ligase (537 aa).

A 'HIGH' region motif is present at residues 11-21 (AYPNAAPHIGH). Residues 301–305 (KMSKS) carry the 'KMSKS' region motif. Lys304 contributes to the ATP binding site. The disordered stretch occupies residues 503–537 (PPPTGVFPRYQPSEIEGADPVKSSSKRREHNKRRE). Residues 526-537 (SSKRREHNKRRE) show a composition bias toward basic residues.

It belongs to the class-I aminoacyl-tRNA synthetase family. MetG type 2B subfamily. As to quaternary structure, monomer.

The protein localises to the cytoplasm. The enzyme catalyses tRNA(Met) + L-methionine + ATP = L-methionyl-tRNA(Met) + AMP + diphosphate. Its function is as follows. Is required not only for elongation of protein synthesis but also for the initiation of all mRNA translation through initiator tRNA(fMet) aminoacylation. This is Methionine--tRNA ligase from Mycobacterium leprae (strain TN).